The following is a 252-amino-acid chain: Agamous-like MADS-box protein AGL6 (252 aa).

In terms of domain architecture, MADS-box spans 3–57 (RGRVEMKRIENKINRQVTFSKRRNGLLKKAYELSVLCDAEVALIIFSSRGKLYEF). The region spanning 86-176 (TQSWCQEVTK…KIKFETEGHA (91 aa)) is the K-box domain. Positions 91 to 173 (QEVTKLKSKY…KQLKIKFETE (83 aa)) form a coiled coil.

In terms of assembly, forms a heterodimer with AGAMOUS. Interacts with AGL15 and AGL16. As to expression, preferentially expressed in flowers.

It is found in the nucleus. Probable transcription factor. Forms a heterodimer via the K-box domain with AG, that could be involved in genes regulation during floral meristem development. The protein is Agamous-like MADS-box protein AGL6 (AGL6) of Arabidopsis thaliana (Mouse-ear cress).